The chain runs to 380 residues: SAM and SH3 domain-containing protein 3 (380 aa).

The interval 1 to 174 is disordered; that stretch reads MLRRKPSNAS…STAPQYTGPF (174 aa). Low complexity predominate over residues 22–41; sequence LQRSSSFKDFAKSKPSSPVV. 3 positions are modified to phosphoserine: Ser27, Ser34, and Ser42. Position 61 is a phosphothreonine (Thr61). Residues 84 to 93 are compositionally biased toward basic residues; it reads MNRKTGKKMV. Phosphoserine is present on Ser97. At Thr103 the chain carries Phosphothreonine. A Phosphoserine modification is found at Ser110. Thr112 carries the phosphothreonine modification. 2 positions are modified to phosphoserine: Ser113 and Ser120. Residues 143–158 show a composition bias toward polar residues; sequence RQASTGSELCSPSPGS. Residues 173–234 enclose the SH3 domain; that stretch reads PFCGRARVHT…KFIYVDVLPE (62 aa). An SAM domain is found at 252-316; sequence PKPKTLHELL…LTAAELLLDY (65 aa). At Thr318 the chain carries Phosphothreonine. Over residues 318-327 the composition is skewed to acidic residues; that stretch reads TGSEEAEEGT. Positions 318 to 380 are disordered; the sequence is TGSEEAEEGT…LHGLSLSGAP (63 aa). Ser320 carries the post-translational modification Phosphoserine.

Belongs to the SASH family.

Its function is as follows. May function as a signaling adapter protein in lymphocytes. This is SAM and SH3 domain-containing protein 3 from Bos taurus (Bovine).